The following is a 167-amino-acid chain: NADH-quinone oxidoreductase subunit B 2 (167 aa).

Cys-38, Cys-39, Cys-104, and Cys-133 together coordinate [4Fe-4S] cluster.

It belongs to the complex I 20 kDa subunit family. In terms of assembly, NDH-1 is composed of 14 different subunits. Subunits NuoB, C, D, E, F, and G constitute the peripheral sector of the complex. [4Fe-4S] cluster serves as cofactor.

The protein resides in the cell membrane. The catalysed reaction is a quinone + NADH + 5 H(+)(in) = a quinol + NAD(+) + 4 H(+)(out). Its function is as follows. NDH-1 shuttles electrons from NADH, via FMN and iron-sulfur (Fe-S) centers, to quinones in the respiratory chain. The immediate electron acceptor for the enzyme in this species is believed to be ubiquinone. Couples the redox reaction to proton translocation (for every two electrons transferred, four hydrogen ions are translocated across the cytoplasmic membrane), and thus conserves the redox energy in a proton gradient. The chain is NADH-quinone oxidoreductase subunit B 2 from Roseiflexus sp. (strain RS-1).